A 314-amino-acid polypeptide reads, in one-letter code: Putative S-adenosyl-L-methionine-dependent methyltransferase MAB_3886c (314 aa).

S-adenosyl-L-methionine is bound by residues D133 and 162–163 (DL).

Belongs to the UPF0677 family.

In terms of biological role, exhibits S-adenosyl-L-methionine-dependent methyltransferase activity. The protein is Putative S-adenosyl-L-methionine-dependent methyltransferase MAB_3886c of Mycobacteroides abscessus (strain ATCC 19977 / DSM 44196 / CCUG 20993 / CIP 104536 / JCM 13569 / NCTC 13031 / TMC 1543 / L948) (Mycobacterium abscessus).